The chain runs to 550 residues: Arginine--tRNA ligase (550 aa).

The 'HIGH' region signature appears at 123–133; that stretch reads ANPTGYLHIAH.

This sequence belongs to the class-I aminoacyl-tRNA synthetase family. Monomer.

It localises to the cytoplasm. It catalyses the reaction tRNA(Arg) + L-arginine + ATP = L-arginyl-tRNA(Arg) + AMP + diphosphate. The polypeptide is Arginine--tRNA ligase (Ureaplasma parvum serovar 3 (strain ATCC 27815 / 27 / NCTC 11736)).